A 324-amino-acid chain; its full sequence is Proto-oncogene Mas (324 aa).

The Extracellular portion of the chain corresponds to 1 to 35 (MDQSNMTSFAEEKAMNTSSRNASLGTSHPPIPIVH). N-linked (GlcNAc...) asparagine glycosylation is found at Asn-5, Asn-16, and Asn-21. Residues 36–60 (WVIMSISPLGFVENGILLWFLCFRM) traverse the membrane as a helical segment. Residues 61 to 64 (RRNP) are Cytoplasmic-facing. The chain crosses the membrane as a helical span at residues 65-86 (FTVYITHLSIADISLLFCIFIL). Over 87 to 103 (SIDYALDYELSSGHYYT) the chain is Extracellular. A helical membrane pass occupies residues 104 to 127 (IVTLSVTFLFGYNTGLYLLTAISV). The Cytoplasmic segment spans residues 128–148 (ERCLSVLYPIWYRCHRPKHQS). The chain crosses the membrane as a helical span at residues 149–171 (AFVCALLWALSCLVTTMEYVMCI). Residues 172–184 (DSGEESHSQSDCR) lie on the Extracellular side of the membrane. Residues 185–205 (AVIIFIAILSFLVFTPLMLVS) traverse the membrane as a helical segment. Topologically, residues 206–223 (STILVVKIRKNTWASHSS) are cytoplasmic. A helical membrane pass occupies residues 224-244 (KLYIVIMVTIIIFLIFAMPMR). At 245–262 (VLYLLYYEYWSTFGNLHN) the chain is on the extracellular side. Residues 263-283 (ISLLFSTINSSANPFIYFFVG) traverse the membrane as a helical segment. Residues 284 to 324 (SSKKKRFRESLKVVLTRAFKDEMQPRRQEGNGNTVSIETVV) are Cytoplasmic-facing.

The protein belongs to the G-protein coupled receptor 1 family. Interacts with AGTR1. Interacts with FLNA (via filamin repeat 21); increases PKA-mediated phosphorylation of FLNA. In terms of tissue distribution, expressed in platelets.

It is found in the cell membrane. Its function is as follows. Receptor for angiotensin 1-7. Acts specifically as a functional antagonist of AGTR1 (angiotensin-2 type 1 receptor), although it up-regulates AGTR1 receptor levels. Positive regulation of AGTR1 levels occurs through activation of the G-proteins GNA11 and GNAQ, and stimulation of the protein kinase C signaling cascade. The antagonist effect on AGTR1 function is probably due to AGTR1 being physically altered by MAS1. The protein is Proto-oncogene Mas (Mas1) of Rattus norvegicus (Rat).